We begin with the raw amino-acid sequence, 500 residues long: 4-aminobutyrate aminotransferase, mitochondrial (500 aa).

The transit peptide at 1-28 (MASVLLTRRLACSFRHNHRLLVPGWRHI) directs the protein to the mitochondrion. Cysteine 163 contributes to the [2Fe-2S] cluster binding site. 164 to 165 (GS) contributes to the pyridoxal 5'-phosphate binding site. A [2Fe-2S] cluster-binding site is contributed by cysteine 166. Residue arginine 220 participates in substrate binding. N6-succinyllysine is present on lysine 231. Lysine 252 is modified (N6-acetyllysine; alternate). Lysine 252 bears the N6-succinyllysine; alternate mark. Residues lysine 279 and lysine 318 each carry the N6-acetyllysine modification. Lysine 357 bears the N6-(pyridoxal phosphate)lysine mark. Residue threonine 381 coordinates pyridoxal 5'-phosphate. The residue at position 413 (lysine 413) is an N6-acetyllysine; alternate. Residue lysine 413 is modified to N6-succinyllysine; alternate. Residues lysine 452 and lysine 470 each carry the N6-acetyllysine modification.

The protein belongs to the class-III pyridoxal-phosphate-dependent aminotransferase family. Homodimer; disulfide-linked. Requires pyridoxal 5'-phosphate as cofactor. [2Fe-2S] cluster is required as a cofactor.

It localises to the mitochondrion matrix. It carries out the reaction 4-aminobutanoate + 2-oxoglutarate = succinate semialdehyde + L-glutamate. It catalyses the reaction (S)-3-amino-2-methylpropanoate + 2-oxoglutarate = 2-methyl-3-oxopropanoate + L-glutamate. Functionally, catalyzes the conversion of gamma-aminobutyrate and L-beta-aminoisobutyrate to succinate semialdehyde and methylmalonate semialdehyde, respectively. Can also convert delta-aminovalerate and beta-alanine. In Sus scrofa (Pig), this protein is 4-aminobutyrate aminotransferase, mitochondrial (ABAT).